The primary structure comprises 671 residues: MVQYNFKRITVVPNGKEFVDIILSRTQRQTPTVVHKGYKINRLRQFYMRKVKYTQTNFHAKLSAIIDEFPRLEQIHPFYGDLLHVLYNKDHYKLALGQVNTARNLISKISKDYVKLLKYGDSLYRCKCLKVAALGRMCTVLKRITPSLAYLEQIRQHMARLPSIDPNTRTVLICGYPNVGKSSFMNKVTRADVDVQPYAFTTKSLFVGHTDYKYLRYQVIDTPGILDRPFEDRNIIEMCSITALAHLRAAVLFFLDISGSCGYTIAQQAALFHSIKSLFMNKPLVIVCNKTDLMPMENISEEDRKLIEEMKSEAMKTAMGASEEQVLLKMSTLTDEGVMSVKNAACERLLDQRVEAKMKSKKINDHLNRFHVAIPKPRDSIERLPCIPQVVLEAKAKEAAAMEKRKTEKDLEEENGGAGVYSASLKKNYILQHDEWKEDIMPEILDGHNVADFIDPDILQRLAELEREEGIREAGVEEADMEMDIEKLSDEQLKQLSEIRKKKAILIKNHRLKKTVAQNRSTVPRKFDKDKKYTTKRMGRELSAMGLDPSSAMDRARSKSRGRKRDRSEDAGNDAMDVDDEQQSNKKQRVRSKSRAMSISRSQSRPPAHEVVPGEGFKDSTQKLSAIKISNKSHKKRDKNARRGEADRVIPTLRPKHLFSGKRGKGKTDRR.

Residues 169-350 (RTVLICGYPN…VKNAACERLL (182 aa)) form the OBG-type G domain. GTP contacts are provided by residues 175 to 182 (GYPNVGKS), 221 to 225 (DTPGI), and 289 to 292 (NKTD). Positions 516–671 (VAQNRSTVPR…KRGKGKTDRR (156 aa)) are disordered. The segment covering 595–605 (RAMSISRSQSR) has biased composition (polar residues). Composition is skewed to basic residues over residues 631 to 640 (NKSHKKRDKN) and 654 to 671 (RPKH…TDRR).

It belongs to the TRAFAC class OBG-HflX-like GTPase superfamily. OBG GTPase family. NOG subfamily.

The protein localises to the nucleus. The protein resides in the nucleolus. Involved in the biogenesis of the 60S ribosomal subunit. The sequence is that of Nucleolar GTP-binding protein 1 from Arabidopsis thaliana (Mouse-ear cress).